A 172-amino-acid polypeptide reads, in one-letter code: NADH-ubiquinone oxidoreductase chain 6 (172 aa).

Transmembrane regions (helical) follow at residues 1–21 (MTYFMFLLLMALVVGLVAVAS), 25–45 (PYFAALGLVVAAGVGCGVLVG), 53–73 (LVLFLIYLGGMLVVFAYAALA), 86–106 (VLGYVLVYLLGVGLVAGIFWG), and 140–160 (GGMLVICAWVLLLTLLVVLEL).

It belongs to the complex I subunit 6 family.

The protein localises to the mitochondrion membrane. It catalyses the reaction a ubiquinone + NADH + 5 H(+)(in) = a ubiquinol + NAD(+) + 4 H(+)(out). In terms of biological role, core subunit of the mitochondrial membrane respiratory chain NADH dehydrogenase (Complex I) that is believed to belong to the minimal assembly required for catalysis. Complex I functions in the transfer of electrons from NADH to the respiratory chain. The immediate electron acceptor for the enzyme is believed to be ubiquinone. The sequence is that of NADH-ubiquinone oxidoreductase chain 6 (MT-ND6) from Cyprinus carpio (Common carp).